Here is a 154-residue protein sequence, read N- to C-terminus: Methylglyoxal synthase (154 aa).

The MGS-like domain occupies 6-154 (QSLPAKKNIA…KYLATRQIDI (149 aa)). Residues histidine 19, lysine 23, 45–48 (TGTT), and 65–66 (SG) each bind substrate. The active-site Proton donor/acceptor is aspartate 71. Position 98 (histidine 98) interacts with substrate.

Belongs to the methylglyoxal synthase family.

The enzyme catalyses dihydroxyacetone phosphate = methylglyoxal + phosphate. In terms of biological role, catalyzes the formation of methylglyoxal from dihydroxyacetone phosphate. This is Methylglyoxal synthase from Pseudoalteromonas translucida (strain TAC 125).